Consider the following 262-residue polypeptide: 3-methyl-2-oxobutanoate hydroxymethyltransferase (262 aa).

Mg(2+) contacts are provided by D44 and D83. 3-methyl-2-oxobutanoate-binding positions include 44-45 (DS), D83, and K113. Mg(2+) is bound at residue E115. The Proton acceptor role is filled by E182.

The protein belongs to the PanB family. In terms of assembly, homodecamer; pentamer of dimers. The cofactor is Mg(2+).

It is found in the cytoplasm. It carries out the reaction 3-methyl-2-oxobutanoate + (6R)-5,10-methylene-5,6,7,8-tetrahydrofolate + H2O = 2-dehydropantoate + (6S)-5,6,7,8-tetrahydrofolate. It participates in cofactor biosynthesis; (R)-pantothenate biosynthesis; (R)-pantoate from 3-methyl-2-oxobutanoate: step 1/2. Functionally, catalyzes the reversible reaction in which hydroxymethyl group from 5,10-methylenetetrahydrofolate is transferred onto alpha-ketoisovalerate to form ketopantoate. This Picosynechococcus sp. (strain ATCC 27264 / PCC 7002 / PR-6) (Agmenellum quadruplicatum) protein is 3-methyl-2-oxobutanoate hydroxymethyltransferase.